Here is a 550-residue protein sequence, read N- to C-terminus: ATP synthase subunit alpha (550 aa).

ATP is bound at residue 172–179; that stretch reads GDRKTGKT. The segment at 514 to 550 is disordered; it reads EDEQRVNEPPAKPLAGEENRETVTRFRDGTTDRPAES. A compositionally biased stretch (basic and acidic residues) spans 528 to 550; it reads AGEENRETVTRFRDGTTDRPAES.

It belongs to the ATPase alpha/beta chains family. F-type ATPases have 2 components, CF(1) - the catalytic core - and CF(0) - the membrane proton channel. CF(1) has five subunits: alpha(3), beta(3), gamma(1), delta(1), epsilon(1). CF(0) has three main subunits: a(1), b(2) and c(9-12). The alpha and beta chains form an alternating ring which encloses part of the gamma chain. CF(1) is attached to CF(0) by a central stalk formed by the gamma and epsilon chains, while a peripheral stalk is formed by the delta and b chains.

It localises to the cell membrane. The enzyme catalyses ATP + H2O + 4 H(+)(in) = ADP + phosphate + 5 H(+)(out). Produces ATP from ADP in the presence of a proton gradient across the membrane. The alpha chain is a regulatory subunit. This chain is ATP synthase subunit alpha, found in Salinispora arenicola (strain CNS-205).